A 220-amino-acid polypeptide reads, in one-letter code: Metalloproteinase inhibitor 2 (220 aa).

Residues 1–26 (MGAAARTLRLALGLLLLATLLRPADA) form the signal peptide. Cys27 contributes to the Zn(2+) binding site. Involved in metalloproteinase-binding regions lie at residues 27 to 30 (CSCS) and 95 to 96 (SA). Cystine bridges form between Cys27–Cys98, Cys29–Cys127, Cys39–Cys152, Cys154–Cys201, Cys159–Cys164, and Cys172–Cys193. Residues 27-152 (CSCSPVHPQQ…SLNHRYQMGC (126 aa)) form the NTR domain.

The protein belongs to the protease inhibitor I35 (TIMP) family. As to quaternary structure, interacts (via the C-terminal) with MMP2 (via the C-terminal PEX domain); the interaction inhibits the MMP2 activity. In terms of processing, the activity of TIMP2 is dependent on the presence of disulfide bonds.

It localises to the secreted. In terms of biological role, complexes with metalloproteinases (such as collagenases) and irreversibly inactivates them by binding to their catalytic zinc cofactor. Known to act on MMP-1, MMP-2, MMP-3, MMP-7, MMP-8, MMP-9, MMP-10, MMP-13, MMP-14, MMP-15, MMP-16 and MMP-19. The sequence is that of Metalloproteinase inhibitor 2 (TIMP2) from Homo sapiens (Human).